We begin with the raw amino-acid sequence, 284 residues long: Phosphonates import ATP-binding protein PhnC 2 (284 aa).

Positions 5–253 (IEVRGLSKSF…MLRDLYGTEA (249 aa)) constitute an ABC transporter domain. 38-45 (GASGSGKS) lines the ATP pocket.

It belongs to the ABC transporter superfamily. Phosphonates importer (TC 3.A.1.9.1) family. In terms of assembly, the complex is composed of two ATP-binding proteins (PhnC), two transmembrane proteins (PhnE) and a solute-binding protein (PhnD).

It localises to the cell inner membrane. The enzyme catalyses phosphonate(out) + ATP + H2O = phosphonate(in) + ADP + phosphate + H(+). Functionally, part of the ABC transporter complex PhnCDE involved in phosphonates import. Responsible for energy coupling to the transport system. The protein is Phosphonates import ATP-binding protein PhnC 2 of Cupriavidus necator (strain ATCC 17699 / DSM 428 / KCTC 22496 / NCIMB 10442 / H16 / Stanier 337) (Ralstonia eutropha).